Here is a 256-residue protein sequence, read N- to C-terminus: Pimeloyl-[acyl-carrier protein] methyl ester esterase (256 aa).

The AB hydrolase-1 domain occupies 15–242; it reads HLVLLHGWGL…AAHAPFISHP (228 aa). Substrate is bound by residues tryptophan 22, 82–83, and 143–147; these read SL and FLALQ. Serine 82 (nucleophile) is an active-site residue. Active-site residues include aspartate 207 and histidine 235. Histidine 235 is a binding site for substrate.

The protein belongs to the AB hydrolase superfamily. Carboxylesterase BioH family. In terms of assembly, monomer.

The protein resides in the cytoplasm. It carries out the reaction 6-carboxyhexanoyl-[ACP] methyl ester + H2O = 6-carboxyhexanoyl-[ACP] + methanol + H(+). Its pathway is cofactor biosynthesis; biotin biosynthesis. Its function is as follows. The physiological role of BioH is to remove the methyl group introduced by BioC when the pimeloyl moiety is complete. It allows to synthesize pimeloyl-ACP via the fatty acid synthetic pathway through the hydrolysis of the ester bonds of pimeloyl-ACP esters. This Escherichia coli (strain 55989 / EAEC) protein is Pimeloyl-[acyl-carrier protein] methyl ester esterase.